Reading from the N-terminus, the 426-residue chain is Histidine--tRNA ligase (426 aa).

This sequence belongs to the class-II aminoacyl-tRNA synthetase family. In terms of assembly, homodimer.

It localises to the cytoplasm. The catalysed reaction is tRNA(His) + L-histidine + ATP = L-histidyl-tRNA(His) + AMP + diphosphate + H(+). In Geobacillus thermodenitrificans (strain NG80-2), this protein is Histidine--tRNA ligase.